The sequence spans 355 residues: Peptide chain release factor 1 (355 aa).

N5-methylglutamine is present on Gln231. The segment at 283–303 is disordered; that stretch reads NAQNKEARKTQVGSGDRSERI.

This sequence belongs to the prokaryotic/mitochondrial release factor family. Methylated by PrmC. Methylation increases the termination efficiency of RF1.

It is found in the cytoplasm. Peptide chain release factor 1 directs the termination of translation in response to the peptide chain termination codons UAG and UAA. This chain is Peptide chain release factor 1, found in Helicobacter hepaticus (strain ATCC 51449 / 3B1).